Here is a 301-residue protein sequence, read N- to C-terminus: Glutamyl-Q tRNA(Asp) synthetase (301 aa).

Residues 8–12 (RFAPS) and glutamate 44 each bind L-glutamate. The 'HIGH' region motif lies at 11 to 21 (PSPTGPLHFGS). Cysteine 100, cysteine 102, tyrosine 122, and cysteine 126 together coordinate Zn(2+). Residues tyrosine 180 and arginine 198 each coordinate L-glutamate. The 'KMSKS' region motif lies at 236-240 (KLSKQ). Lysine 239 is a binding site for ATP.

It belongs to the class-I aminoacyl-tRNA synthetase family. GluQ subfamily. Zn(2+) serves as cofactor.

Functionally, catalyzes the tRNA-independent activation of glutamate in presence of ATP and the subsequent transfer of glutamate onto a tRNA(Asp). Glutamate is transferred on the 2-amino-5-(4,5-dihydroxy-2-cyclopenten-1-yl) moiety of the queuosine in the wobble position of the QUC anticodon. The chain is Glutamyl-Q tRNA(Asp) synthetase from Dechloromonas aromatica (strain RCB).